The sequence spans 181 residues: UPF0398 protein LMOf2365_1918 (181 aa).

It belongs to the UPF0398 family.

This chain is UPF0398 protein LMOf2365_1918, found in Listeria monocytogenes serotype 4b (strain F2365).